Consider the following 638-residue polypeptide: Chaperone protein HtpG (638 aa).

The interval 1–343 (MTSTIDSDGA…SADLPLNISR (343 aa)) is a; substrate-binding. Residues 344–557 (EMIQESPILA…ESGPDRQLEK (214 aa)) are b. The segment at 558–638 (ILVGVGQLTG…VERGLRGSTA (81 aa)) is c.

This sequence belongs to the heat shock protein 90 family. As to quaternary structure, homodimer.

Its subcellular location is the cytoplasm. Functionally, molecular chaperone. Has ATPase activity. This Nitrobacter hamburgensis (strain DSM 10229 / NCIMB 13809 / X14) protein is Chaperone protein HtpG.